Reading from the N-terminus, the 338-residue chain is Mitochondrial amidoxime reducing component 2 (338 aa).

The N-terminal 35 residues, 1 to 35 (MGSSSSTALARLGLPGQPRSTWLGVAALGLAAVAL), are a transit peptide targeting the mitochondrion. Residues lysine 59, lysine 138, and lysine 144 each participate in a glycyl lysine isopeptide (Lys-Gly) (interchain with G-Cter in ubiquitin) cross-link. At lysine 156 the chain carries N6-acetyllysine; alternate. Lysine 156 is covalently cross-linked (Glycyl lysine isopeptide (Lys-Gly) (interchain with G-Cter in ubiquitin); alternate). Glycyl lysine isopeptide (Lys-Gly) (interchain with G-Cter in ubiquitin) cross-links involve residues lysine 173, lysine 187, lysine 289, and lysine 296. The MOSC domain maps to 188–336 (GRTTKKLYPS…LRVGDPVYRM (149 aa)).

Component of a complex composed of cytochrome b5, NADH-cytochrome b5 reductase (CYB5R3) and MTARC2. Mo-molybdopterin is required as a cofactor. In terms of processing, ubiquitinated by PRKN during mitophagy, leading to its degradation and enhancement of mitophagy. Deubiquitinated by USP30.

Its subcellular location is the mitochondrion outer membrane. It localises to the peroxisome. The catalysed reaction is N(omega)-hydroxy-L-arginine + 2 Fe(II)-[cytochrome b5] + 2 H(+) = L-arginine + 2 Fe(III)-[cytochrome b5] + H2O. In terms of biological role, catalyzes the reduction of N-oxygenated molecules, acting as a counterpart of cytochrome P450 and flavin-containing monooxygenases in metabolic cycles. As a component of prodrug-converting system, reduces a multitude of N-hydroxylated prodrugs particularly amidoximes, leading to increased drug bioavailability. May be involved in mitochondrial N(omega)-hydroxy-L-arginine (NOHA) reduction, regulating endogenous nitric oxide levels and biosynthesis. Postulated to cleave the N-OH bond of N-hydroxylated substrates in concert with electron transfer from NADH to cytochrome b5 reductase then to cytochrome b5, the ultimate electron donor that primes the active site for substrate reduction. This Rattus norvegicus (Rat) protein is Mitochondrial amidoxime reducing component 2 (Mtarc2).